The primary structure comprises 92 residues: Small ribosomal subunit protein bS20 (92 aa).

Residues 1–25 (MANSAQARKRARQAAKANSHNSALR) are disordered.

This sequence belongs to the bacterial ribosomal protein bS20 family.

In terms of biological role, binds directly to 16S ribosomal RNA. The polypeptide is Small ribosomal subunit protein bS20 (Burkholderia mallei (strain NCTC 10247)).